The chain runs to 113 residues: Prefoldin subunit beta (113 aa).

It belongs to the prefoldin subunit beta family. In terms of assembly, heterohexamer of two alpha and four beta subunits.

It localises to the cytoplasm. Functionally, molecular chaperone capable of stabilizing a range of proteins. Seems to fulfill an ATP-independent, HSP70-like function in archaeal de novo protein folding. In Methanocaldococcus jannaschii (strain ATCC 43067 / DSM 2661 / JAL-1 / JCM 10045 / NBRC 100440) (Methanococcus jannaschii), this protein is Prefoldin subunit beta (pfdB).